Consider the following 698-residue polypeptide: Elongation factor G 1 (698 aa).

The tr-type G domain maps to 8 to 290 (ERYRNIGICA…AVVEFLPAPV (283 aa)). GTP is bound by residues 17–24 (AHVDAGKT), 88–92 (DTPGH), and 142–145 (NKMD).

Belongs to the TRAFAC class translation factor GTPase superfamily. Classic translation factor GTPase family. EF-G/EF-2 subfamily.

The protein localises to the cytoplasm. Catalyzes the GTP-dependent ribosomal translocation step during translation elongation. During this step, the ribosome changes from the pre-translocational (PRE) to the post-translocational (POST) state as the newly formed A-site-bound peptidyl-tRNA and P-site-bound deacylated tRNA move to the P and E sites, respectively. Catalyzes the coordinated movement of the two tRNA molecules, the mRNA and conformational changes in the ribosome. This chain is Elongation factor G 1, found in Shewanella oneidensis (strain ATCC 700550 / JCM 31522 / CIP 106686 / LMG 19005 / NCIMB 14063 / MR-1).